Reading from the N-terminus, the 213-residue chain is Outer-membrane lipoprotein carrier protein (213 aa).

Positions 1 to 23 (MKKLLKQSLLGFALVSMTGAAFA) are cleaved as a signal peptide.

Belongs to the LolA family. In terms of assembly, monomer.

The protein localises to the periplasm. In terms of biological role, participates in the translocation of lipoproteins from the inner membrane to the outer membrane. Only forms a complex with a lipoprotein if the residue after the N-terminal Cys is not an aspartate (The Asp acts as a targeting signal to indicate that the lipoprotein should stay in the inner membrane). This chain is Outer-membrane lipoprotein carrier protein, found in Actinobacillus pleuropneumoniae serotype 7 (strain AP76).